We begin with the raw amino-acid sequence, 864 residues long: Leucine--tRNA ligase (864 aa).

The 'HIGH' region motif lies at 50 to 60; it reads PYPSGKIHMGH. Positions 622–626 match the 'KMSKS' region motif; it reads KMSKS. Lys625 contributes to the ATP binding site.

This sequence belongs to the class-I aminoacyl-tRNA synthetase family.

The protein localises to the cytoplasm. The enzyme catalyses tRNA(Leu) + L-leucine + ATP = L-leucyl-tRNA(Leu) + AMP + diphosphate. In Acidiphilium cryptum (strain JF-5), this protein is Leucine--tRNA ligase.